The chain runs to 335 residues: Glyceraldehyde-3-phosphate dehydrogenase (335 aa).

NAD(+) is bound by residues 12–13 (RI), aspartate 36, arginine 80, and serine 122. Residues 152–154 (SCT), threonine 183, arginine 198, 211–212 (TG), and arginine 234 contribute to the D-glyceraldehyde 3-phosphate site. Cysteine 153 functions as the Nucleophile in the catalytic mechanism. Residue asparagine 316 participates in NAD(+) binding.

The protein belongs to the glyceraldehyde-3-phosphate dehydrogenase family. In terms of assembly, homotetramer.

The protein localises to the cytoplasm. The catalysed reaction is D-glyceraldehyde 3-phosphate + phosphate + NAD(+) = (2R)-3-phospho-glyceroyl phosphate + NADH + H(+). Its pathway is carbohydrate degradation; glycolysis; pyruvate from D-glyceraldehyde 3-phosphate: step 1/5. Catalyzes the oxidative phosphorylation of glyceraldehyde 3-phosphate (G3P) to 1,3-bisphosphoglycerate (BPG) using the cofactor NAD. The first reaction step involves the formation of a hemiacetal intermediate between G3P and a cysteine residue, and this hemiacetal intermediate is then oxidized to a thioester, with concomitant reduction of NAD to NADH. The reduced NADH is then exchanged with the second NAD, and the thioester is attacked by a nucleophilic inorganic phosphate to produce BPG. In Xanthobacter flavus, this protein is Glyceraldehyde-3-phosphate dehydrogenase (gap).